We begin with the raw amino-acid sequence, 317 residues long: Ornithine carbamoyltransferase (317 aa).

Residues Ser54–Thr57, Gln81, Arg105, and His132–Gln135 contribute to the carbamoyl phosphate site. Residues Asn163, Asp227, and Ser231–Met232 contribute to the L-ornithine site. Residues Cys267–Leu268 and Arg295 each bind carbamoyl phosphate.

It belongs to the aspartate/ornithine carbamoyltransferase superfamily. OTCase family.

Its subcellular location is the cytoplasm. The catalysed reaction is carbamoyl phosphate + L-ornithine = L-citrulline + phosphate + H(+). The protein operates within amino-acid biosynthesis; L-arginine biosynthesis; L-arginine from L-ornithine and carbamoyl phosphate: step 1/3. In terms of biological role, reversibly catalyzes the transfer of the carbamoyl group from carbamoyl phosphate (CP) to the N(epsilon) atom of ornithine (ORN) to produce L-citrulline. The sequence is that of Ornithine carbamoyltransferase from Parafrankia sp. (strain EAN1pec).